A 329-amino-acid polypeptide reads, in one-letter code: 4-hydroxythreonine-4-phosphate dehydrogenase (329 aa).

2 residues coordinate substrate: His-136 and Thr-137. A divalent metal cation-binding residues include His-166, His-211, and His-266. Residues Lys-274, Asn-283, and Arg-292 each contribute to the substrate site.

It belongs to the PdxA family. As to quaternary structure, homodimer. The cofactor is Zn(2+). Mg(2+) serves as cofactor. It depends on Co(2+) as a cofactor.

The protein localises to the cytoplasm. It catalyses the reaction 4-(phosphooxy)-L-threonine + NAD(+) = 3-amino-2-oxopropyl phosphate + CO2 + NADH. It participates in cofactor biosynthesis; pyridoxine 5'-phosphate biosynthesis; pyridoxine 5'-phosphate from D-erythrose 4-phosphate: step 4/5. In terms of biological role, catalyzes the NAD(P)-dependent oxidation of 4-(phosphooxy)-L-threonine (HTP) into 2-amino-3-oxo-4-(phosphooxy)butyric acid which spontaneously decarboxylates to form 3-amino-2-oxopropyl phosphate (AHAP). This is 4-hydroxythreonine-4-phosphate dehydrogenase from Escherichia coli O81 (strain ED1a).